The sequence spans 472 residues: 3-isopropylmalate dehydratase large subunit (472 aa).

Positions 353, 414, and 417 each coordinate [4Fe-4S] cluster.

It belongs to the aconitase/IPM isomerase family. LeuC type 1 subfamily. In terms of assembly, heterodimer of LeuC and LeuD. [4Fe-4S] cluster serves as cofactor.

It carries out the reaction (2R,3S)-3-isopropylmalate = (2S)-2-isopropylmalate. The protein operates within amino-acid biosynthesis; L-leucine biosynthesis; L-leucine from 3-methyl-2-oxobutanoate: step 2/4. In terms of biological role, catalyzes the isomerization between 2-isopropylmalate and 3-isopropylmalate, via the formation of 2-isopropylmaleate. The protein is 3-isopropylmalate dehydratase large subunit of Acinetobacter baumannii (strain ACICU).